A 201-amino-acid polypeptide reads, in one-letter code: Pyridoxine/pyridoxamine 5'-phosphate oxidase (201 aa).

Residues 45 to 50 (RMVLLK), 65 to 66 (YT), Arg71, Lys72, and Gln94 contribute to the FMN site. Position 50 (Lys50) interacts with substrate. Substrate-binding residues include Tyr112, Arg116, and Ser120. FMN is bound by residues 129 to 130 (QS) and Trp174. 180–182 (RLH) serves as a coordination point for substrate. Position 184 (Arg184) interacts with FMN.

It belongs to the pyridoxamine 5'-phosphate oxidase family. In terms of assembly, homodimer. Requires FMN as cofactor.

It carries out the reaction pyridoxamine 5'-phosphate + O2 + H2O = pyridoxal 5'-phosphate + H2O2 + NH4(+). It catalyses the reaction pyridoxine 5'-phosphate + O2 = pyridoxal 5'-phosphate + H2O2. It participates in cofactor metabolism; pyridoxal 5'-phosphate salvage; pyridoxal 5'-phosphate from pyridoxamine 5'-phosphate: step 1/1. The protein operates within cofactor metabolism; pyridoxal 5'-phosphate salvage; pyridoxal 5'-phosphate from pyridoxine 5'-phosphate: step 1/1. Catalyzes the oxidation of either pyridoxine 5'-phosphate (PNP) or pyridoxamine 5'-phosphate (PMP) into pyridoxal 5'-phosphate (PLP). The chain is Pyridoxine/pyridoxamine 5'-phosphate oxidase from Rhodospirillum rubrum (strain ATCC 11170 / ATH 1.1.1 / DSM 467 / LMG 4362 / NCIMB 8255 / S1).